A 211-amino-acid chain; its full sequence is Endonuclease YncB (211 aa).

The first 19 residues, 1–19, serve as a signal peptide directing secretion; it reads MKKILISMIAIVLSITLAA. Cys-20 is lipidated: N-palmitoyl cysteine. Cys-20 carries the S-diacylglycerol cysteine lipid modification. A disordered region spans residues 24–63; it reads HAAKNHSDSNGTEQVSQDTHSNEYNQTEQKAGTPHSKNQK. The segment covering 31–53 has biased composition (polar residues); that stretch reads DSNGTEQVSQDTHSNEYNQTEQK. Residues 64–197 enclose the TNase-like domain; that stretch reads KLVNVTLDRA…KSDKLSIWSK (134 aa). Asp-77 contacts Ca(2+). Residue Arg-91 is part of the active site. Positions 96 and 97 each coordinate Ca(2+). Active-site residues include Glu-99 and Arg-142.

Belongs to the thermonuclease family. Ca(2+) is required as a cofactor.

The protein resides in the cell membrane. Its activity is regulated as follows. Inhibited by aurintricalboxylic acid but not by Zn(2+). Its function is as follows. Shows DNase activity on double strand DNA. The protein is Endonuclease YncB (yncB) of Bacillus subtilis (strain 168).